The chain runs to 184 residues: Nucleoside triphosphate pyrophosphatase (184 aa).

Asp-66 serves as the catalytic Proton acceptor.

The protein belongs to the Maf family. It depends on a divalent metal cation as a cofactor.

It localises to the cytoplasm. It catalyses the reaction a ribonucleoside 5'-triphosphate + H2O = a ribonucleoside 5'-phosphate + diphosphate + H(+). The catalysed reaction is a 2'-deoxyribonucleoside 5'-triphosphate + H2O = a 2'-deoxyribonucleoside 5'-phosphate + diphosphate + H(+). In terms of biological role, nucleoside triphosphate pyrophosphatase. May have a dual role in cell division arrest and in preventing the incorporation of modified nucleotides into cellular nucleic acids. This chain is Nucleoside triphosphate pyrophosphatase, found in Prochlorococcus marinus (strain MIT 9313).